The following is a 92-amino-acid chain: Small ribosomal subunit protein bS18 (92 aa).

This sequence belongs to the bacterial ribosomal protein bS18 family. Part of the 30S ribosomal subunit. Forms a tight heterodimer with protein bS6.

Functionally, binds as a heterodimer with protein bS6 to the central domain of the 16S rRNA, where it helps stabilize the platform of the 30S subunit. This is Small ribosomal subunit protein bS18 from Cupriavidus necator (strain ATCC 17699 / DSM 428 / KCTC 22496 / NCIMB 10442 / H16 / Stanier 337) (Ralstonia eutropha).